Reading from the N-terminus, the 126-residue chain is Fluoride-specific ion channel FluC (126 aa).

The next 4 membrane-spanning stretches (helical) occupy residues 3-23 (PLGFVAVGIGAAVGAWLRWGL), 36-56 (YGTLAANLLGGYLIGLAVGFF), 68-88 (LLAITGFLGGLTTFSTFSSEA), and 99-119 (WALLHLLSHLGGSLLFAALGL). Residues glycine 76 and threonine 79 each contribute to the Na(+) site.

It belongs to the fluoride channel Fluc/FEX (TC 1.A.43) family.

Its subcellular location is the cell inner membrane. It catalyses the reaction fluoride(in) = fluoride(out). Na(+) is not transported, but it plays an essential structural role and its presence is essential for fluoride channel function. Fluoride-specific ion channel. Important for reducing fluoride concentration in the cell, thus reducing its toxicity. In Cupriavidus pinatubonensis (strain JMP 134 / LMG 1197) (Cupriavidus necator (strain JMP 134)), this protein is Fluoride-specific ion channel FluC.